A 338-amino-acid chain; its full sequence is Phenylalanine--tRNA ligase alpha subunit (338 aa).

Residue Glu252 participates in Mg(2+) binding.

The protein belongs to the class-II aminoacyl-tRNA synthetase family. Phe-tRNA synthetase alpha subunit type 1 subfamily. Tetramer of two alpha and two beta subunits. The cofactor is Mg(2+).

It is found in the cytoplasm. The catalysed reaction is tRNA(Phe) + L-phenylalanine + ATP = L-phenylalanyl-tRNA(Phe) + AMP + diphosphate + H(+). The polypeptide is Phenylalanine--tRNA ligase alpha subunit (pheS) (Aquifex aeolicus (strain VF5)).